Reading from the N-terminus, the 404-residue chain is NADH-quinone oxidoreductase subunit D 2 (404 aa).

This sequence belongs to the complex I 49 kDa subunit family. As to quaternary structure, NDH-1 is composed of 14 different subunits. Subunits NuoB, C, D, E, F, and G constitute the peripheral sector of the complex.

The protein resides in the cell inner membrane. The catalysed reaction is a quinone + NADH + 5 H(+)(in) = a quinol + NAD(+) + 4 H(+)(out). In terms of biological role, NDH-1 shuttles electrons from NADH, via FMN and iron-sulfur (Fe-S) centers, to quinones in the respiratory chain. The immediate electron acceptor for the enzyme in this species is believed to be ubiquinone. Couples the redox reaction to proton translocation (for every two electrons transferred, four hydrogen ions are translocated across the cytoplasmic membrane), and thus conserves the redox energy in a proton gradient. The polypeptide is NADH-quinone oxidoreductase subunit D 2 (Rhizobium etli (strain ATCC 51251 / DSM 11541 / JCM 21823 / NBRC 15573 / CFN 42)).